Here is a 100-residue protein sequence, read N- to C-terminus: Apolipoprotein C-II (100 aa).

The first 22 residues, 1–22 (MGSRFLLALFLILLVLGCEVQA), serve as a signal peptide directing secretion. The segment at 66–74 (SVDEKLRDM) is lipid binding. Residues 78-100 (SSAAMTTYASIFTDQILTLLKGE) form a lipoprotein lipase cofactor region.

The protein belongs to the apolipoprotein C2 family. In terms of processing, proapolipoprotein C-II is synthesized as a sialic acid containing glycoprotein which is subsequently desialylated prior to its proteolytic processing. Post-translationally, proapolipoprotein C-II, the major form found in plasma undergoes proteolytic cleavage of its N-terminal hexapeptide to generate the mature form apolipoprotein C-II, which occurs as the minor form in plasma.

The protein resides in the secreted. In terms of biological role, component of chylomicrons, very low-density lipoproteins (VLDL), low-density lipoproteins (LDL), and high-density lipoproteins (HDL) in plasma. Plays an important role in lipoprotein metabolism as an activator of lipoprotein lipase. In Microtus ochrogaster (Prairie vole), this protein is Apolipoprotein C-II (APOC2).